The primary structure comprises 325 residues: Beta-1,3-galactosyltransferase 6 (325 aa).

Residues 1–11 (MKVFRRAWRHR) lie on the Cytoplasmic side of the membrane. Residues 12-30 (VALGLGGLAFCGTTLLYLA) form a helical; Signal-anchor for type II membrane protein membrane-spanning segment. The Lumenal portion of the chain corresponds to 31 to 325 (RCASEGETPS…QCCQRKEGVP (295 aa)). A glycan (N-linked (GlcNAc...) asparagine) is linked at Asn127.

It belongs to the glycosyltransferase 31 family. Requires Mn(2+) as cofactor.

It localises to the golgi apparatus. The protein localises to the golgi stack membrane. The catalysed reaction is 3-O-(beta-D-galactosyl-(1-&gt;4)-beta-D-xylosyl)-L-seryl-[protein] + UDP-alpha-D-galactose = 3-O-(beta-D-galactosyl-(1-&gt;3)-beta-D-galactosyl-(1-&gt;4)-beta-D-xylosyl)-L-seryl-[protein] + UDP + H(+). It functions in the pathway glycan metabolism; chondroitin sulfate biosynthesis. It participates in glycan metabolism; heparan sulfate biosynthesis. Beta-1,3-galactosyltransferase that transfers galactose from UDP-galactose to substrates with a terminal beta-linked galactose residue. Has a preference for galactose-beta-1,4-xylose that is found in the linker region of glycosaminoglycans, such as heparan sulfate and chondroitin sulfate. Has no activity towards substrates with terminal glucosamine or galactosamine residues. The chain is Beta-1,3-galactosyltransferase 6 (B3galt6) from Mus musculus (Mouse).